Consider the following 607-residue polypeptide: ATP-dependent rRNA helicase SPB4 (607 aa).

The Q motif signature appears at 7–35; that stretch reads WDDLEYPIQPWIRSAVDVMGFENMTPVQA. The Helicase ATP-binding domain maps to 38 to 224; sequence IPLFARNKDV…KTGLRNPVKV (187 aa). ATP is bound at residue 51–58; the sequence is SVTGSGKT. The DEAD box motif lies at 172–175; that stretch reads DEAD. Residues 248-404 enclose the Helicase C-terminal domain; sequence KLEQVISIIN…EISLDIVNLP (157 aa). Positions 527–607 are disordered; it reads KSELKKKNMS…NGMQGSFDDL (81 aa). Residues 529–565 are a coiled coil; the sequence is ELKKKNMSWSNNTQSKEEKVERRTKMALKRKRIEEEL. Composition is skewed to basic and acidic residues over residues 543 to 552 and 560 to 570; these read SKEEKVERRT and RIEEELSKEAD. A compositionally biased stretch (polar residues) spans 587–601; that stretch reads ILQNKKSKNSNNGMQ.

It belongs to the DEAD box helicase family. DDX55/SPB4 subfamily. In terms of assembly, component of pre-60S ribosomal complexes.

It is found in the nucleus. The protein localises to the nucleolus. It carries out the reaction ATP + H2O = ADP + phosphate + H(+). ATP-binding RNA helicase involved in the biogenesis of 60S ribosomal subunits. Binds 90S pre-ribosomal particles and dissociates from pre-60S ribosomal particles after processing of 27SB pre-rRNA. Required for the normal formation of 18S rRNA through the processing of pre-rRNAs at sites A0, A1 and A2, and the normal formation of 25S and 5.8S rRNAs through the processing of pre-rRNAs at sites C1 and C2. This Vanderwaltozyma polyspora (strain ATCC 22028 / DSM 70294 / BCRC 21397 / CBS 2163 / NBRC 10782 / NRRL Y-8283 / UCD 57-17) (Kluyveromyces polysporus) protein is ATP-dependent rRNA helicase SPB4.